Reading from the N-terminus, the 168-residue chain is Ribosome maturation factor RimM (168 aa).

Residues 95–168 (EEGYYWSDLI…RITVDWGLDY (74 aa)) enclose the PRC barrel domain.

This sequence belongs to the RimM family. Binds ribosomal protein uS19.

It localises to the cytoplasm. Functionally, an accessory protein needed during the final step in the assembly of 30S ribosomal subunit, possibly for assembly of the head region. Essential for efficient processing of 16S rRNA. May be needed both before and after RbfA during the maturation of 16S rRNA. It has affinity for free ribosomal 30S subunits but not for 70S ribosomes. The sequence is that of Ribosome maturation factor RimM from Nitrosospira multiformis (strain ATCC 25196 / NCIMB 11849 / C 71).